Here is a 103-residue protein sequence, read N- to C-terminus: Large ribosomal subunit protein bL21 (103 aa).

The protein belongs to the bacterial ribosomal protein bL21 family. Part of the 50S ribosomal subunit. Contacts protein L20.

In terms of biological role, this protein binds to 23S rRNA in the presence of protein L20. This chain is Large ribosomal subunit protein bL21, found in Actinobacillus pleuropneumoniae serotype 5b (strain L20).